Consider the following 459-residue polypeptide: Argininosuccinate lyase (459 aa).

This sequence belongs to the lyase 1 family. Argininosuccinate lyase subfamily.

The protein resides in the cytoplasm. The enzyme catalyses 2-(N(omega)-L-arginino)succinate = fumarate + L-arginine. Its pathway is amino-acid biosynthesis; L-arginine biosynthesis; L-arginine from L-ornithine and carbamoyl phosphate: step 3/3. This is Argininosuccinate lyase from Ruminiclostridium cellulolyticum (strain ATCC 35319 / DSM 5812 / JCM 6584 / H10) (Clostridium cellulolyticum).